The chain runs to 492 residues: Ketol-acid reductoisomerase (NADP(+)) (492 aa).

Residues 15-208 (AQLGKCRFMA…GGHRAGVLES (194 aa)) form the KARI N-terminal Rossmann domain. Residues 45-48 (CGAQ), Arg-68, Arg-76, Ser-78, and 108-110 (DKQ) contribute to the NADP(+) site. Residue His-132 is part of the active site. Gly-158 contacts NADP(+). KARI C-terminal knotted domains lie at 209–344 (SFVA…TAAQ) and 345–485 (FEGK…MTDM). The Mg(2+) site is built by Asp-217, Glu-221, Glu-389, and Glu-393. Residue Ser-414 coordinates substrate.

It belongs to the ketol-acid reductoisomerase family. The cofactor is Mg(2+).

The enzyme catalyses (2R)-2,3-dihydroxy-3-methylbutanoate + NADP(+) = (2S)-2-acetolactate + NADPH + H(+). It carries out the reaction (2R,3R)-2,3-dihydroxy-3-methylpentanoate + NADP(+) = (S)-2-ethyl-2-hydroxy-3-oxobutanoate + NADPH + H(+). Its pathway is amino-acid biosynthesis; L-isoleucine biosynthesis; L-isoleucine from 2-oxobutanoate: step 2/4. It functions in the pathway amino-acid biosynthesis; L-valine biosynthesis; L-valine from pyruvate: step 2/4. Functionally, involved in the biosynthesis of branched-chain amino acids (BCAA). Catalyzes an alkyl-migration followed by a ketol-acid reduction of (S)-2-acetolactate (S2AL) to yield (R)-2,3-dihydroxy-isovalerate. In the isomerase reaction, S2AL is rearranged via a Mg-dependent methyl migration to produce 3-hydroxy-3-methyl-2-ketobutyrate (HMKB). In the reductase reaction, this 2-ketoacid undergoes a metal-dependent reduction by NADPH to yield (R)-2,3-dihydroxy-isovalerate. In Erwinia tasmaniensis (strain DSM 17950 / CFBP 7177 / CIP 109463 / NCPPB 4357 / Et1/99), this protein is Ketol-acid reductoisomerase (NADP(+)).